A 283-amino-acid polypeptide reads, in one-letter code: MPELPEVETVRRGLEPAMAGRLIAEARVNRADLRWPFPPRMAERLTGQRVLRLRRRSKYILADLSGGQSLLIHLGMSGRMLVSGAQLGEFFHGHPAPSRHDHVVLEMEGGARITFNDARRFGAMDLVATEAAEAHPLLAVLGPEPLGNAFDGAYLAARLEGRRTPIKAALLDQRIVAGLGNIYVCEVLFRAGLAPGRLAGSLSRAEAEGLVPLIREVLLEAIEAGGSSLRDYRQADGELGYFQHTFRVYGREGLPCVTPGCSGTVGRIVQSGRSSFHCPLCQR.

The Schiff-base intermediate with DNA role is filled by Pro2. Glu3 serves as the catalytic Proton donor. The Proton donor; for beta-elimination activity role is filled by Lys58. Residues His100, Arg119, and Arg162 each contribute to the DNA site. The segment at 247–283 (RVYGREGLPCVTPGCSGTVGRIVQSGRSSFHCPLCQR) adopts an FPG-type zinc-finger fold. Catalysis depends on Arg273, which acts as the Proton donor; for delta-elimination activity.

This sequence belongs to the FPG family. As to quaternary structure, monomer. It depends on Zn(2+) as a cofactor.

The enzyme catalyses Hydrolysis of DNA containing ring-opened 7-methylguanine residues, releasing 2,6-diamino-4-hydroxy-5-(N-methyl)formamidopyrimidine.. The catalysed reaction is 2'-deoxyribonucleotide-(2'-deoxyribose 5'-phosphate)-2'-deoxyribonucleotide-DNA = a 3'-end 2'-deoxyribonucleotide-(2,3-dehydro-2,3-deoxyribose 5'-phosphate)-DNA + a 5'-end 5'-phospho-2'-deoxyribonucleoside-DNA + H(+). Its function is as follows. Involved in base excision repair of DNA damaged by oxidation or by mutagenic agents. Acts as a DNA glycosylase that recognizes and removes damaged bases. Has a preference for oxidized purines, such as 7,8-dihydro-8-oxoguanine (8-oxoG). Has AP (apurinic/apyrimidinic) lyase activity and introduces nicks in the DNA strand. Cleaves the DNA backbone by beta-delta elimination to generate a single-strand break at the site of the removed base with both 3'- and 5'-phosphates. This is Formamidopyrimidine-DNA glycosylase from Cereibacter sphaeroides (strain ATCC 17029 / ATH 2.4.9) (Rhodobacter sphaeroides).